We begin with the raw amino-acid sequence, 1518 residues long: WD repeat-containing protein 62 (1518 aa).

N-acetylalanine is present on A2. S33 bears the Phosphoserine mark. Position 46 is a phosphothreonine (T46). S49 bears the Phosphoserine mark. The residue at position 50 (T50) is a Phosphothreonine. At S52 the chain carries Phosphoserine. 12 WD repeats span residues 109–150 (TARK…QVAE), 153–194 (GHKY…VVAS), 196–234 (KVSCRVIALSFSEDSSYFVTVGNRHVRFWFLEVSTETKV), 291–330 (INLKVSLSSCLCVSQELIFCGCTDGIVRIFQAHSLHYLAN), 357–396 (AVYPDTVALTFDPIHQWLSCVYKDHSIYIWDVKDINRVGK), 402–450 (FHSS…DSHW), 490–529 (DVKAGVRVMQVSPDGQHLASGDRSGNLRIHELHFMDELVK), 532–574 (AHDA…NLEQ), 578–618 (DHSS…DGLH), 626–665 (AEKTTLYDMDIDITQKYVAVACQDRNVRVYNTVNGKQKKC), 671–713 (GDEG…KMFG), and 714–752 (HSEIITSMKFTYDCHHLITVSGDSCVFIWHLGPEITNCM). A Phosphoserine modification is found at S501. Residues 762–772 (RQQQQHTNDKK) are compositionally biased toward basic and acidic residues. Disordered stretches follow at residues 762 to 824 (RQQQ…DPDP) and 908 to 935 (ASLLSESESPQEAGRGHPSFLPQQKESS). The segment covering 781 to 790 (TYVSTPSEIH) has biased composition (polar residues). A compositionally biased stretch (acidic residues) spans 797-809 (QTEDDLEEECEPE). The stretch at 803–846 (EEECEPEEMLKTPSKDSLDPDPRCLLTNGKLPLWAKRLLGDDDV) is one WD 13 repeat. Residues 810 to 824 (EMLKTPSKDSLDPDP) show a composition bias toward basic and acidic residues. Positions 908–920 (ASLLSESESPQEA) are enriched in low complexity. Position 944 is a phosphoserine (S944). The segment at 962-1055 (EVEAGPGDQQ…PSSSLPQTPE (94 aa)) is disordered. Polar residues-rich tracts occupy residues 971–981 (QGDSYLRVSSD) and 1045–1054 (VPSSSLPQTP). The residue at position 1053 (T1053) is a Phosphothreonine. 8 positions are modified to phosphoserine: S1070, S1093, S1101, S1123, S1144, S1228, S1248, and S1249. A WD 14 repeat occupies 1132-1173 (GGSQPRAGTGYASPDRTHVLAAGKAEETLEAWRPPPPCLTSL). One copy of the WD 15 repeat lies at 1255–1293 (SLGQELQAITTATTPSLDSEGQEPALRSWGNHEARANLR). Phosphothreonine is present on T1268. The tract at residues 1339–1377 (FRPSLPAPESPGLPAHPSNPQLPEARPGIPGGTASLLEP) is disordered.

Can form homodimers (via C-terminus). Interacts (via C-terminus) with MAPKBP1 (via C-terminus). Interacts with CDK5RAP2, CEP152, CEP63 and KIAA0753. CEP63, CDK5RAP2, CEP152, WDR62 are proposed to form a stepwise assembled complex at the centrosome forming a ring near parental centrioles. Present in fetal brain, enriched within the ventricular and subventricular zone (at protein level). In the embryonic brain it is expressed in mitotic neural precursor cells.

It localises to the nucleus. Its subcellular location is the cytoplasm. The protein resides in the cytoskeleton. The protein localises to the spindle pole. It is found in the microtubule organizing center. It localises to the centrosome. Its subcellular location is the centriole. In terms of biological role, required for cerebral cortical development. Plays a role in neuronal proliferation and migration. Plays a role in mother-centriole-dependent centriole duplication; the function also seems to involve CEP152, CDK5RAP2 and CEP63 through a stepwise assembled complex at the centrosome that recruits CDK2 required for centriole duplication. This Homo sapiens (Human) protein is WD repeat-containing protein 62 (WDR62).